The following is a 197-amino-acid chain: Proteasome subunit beta 1 (197 aa).

Positions 1–6 are cleaved as a propeptide — removed in mature form; by autocatalysis; it reads MNRKTG. Thr-7 functions as the Nucleophile in the catalytic mechanism.

The protein belongs to the peptidase T1B family. The 20S proteasome core is composed of 14 alpha and 14 beta subunits that assemble into four stacked heptameric rings, resulting in a barrel-shaped structure. The two inner rings, each composed of seven catalytic beta subunits, are sandwiched by two outer rings, each composed of seven alpha subunits. The catalytic chamber with the active sites is on the inside of the barrel. Has a gated structure, the ends of the cylinder being occluded by the N-termini of the alpha-subunits. Is capped at one or both ends by the proteasome regulatory ATPase, PAN.

The protein localises to the cytoplasm. It catalyses the reaction Cleavage of peptide bonds with very broad specificity.. Its activity is regulated as follows. The formation of the proteasomal ATPase PAN-20S proteasome complex, via the docking of the C-termini of PAN into the intersubunit pockets in the alpha-rings, triggers opening of the gate for substrate entry. Interconversion between the open-gate and close-gate conformations leads to a dynamic regulation of the 20S proteasome proteolysis activity. In terms of biological role, component of the proteasome core, a large protease complex with broad specificity involved in protein degradation. The chain is Proteasome subunit beta 1 from Pyrococcus horikoshii (strain ATCC 700860 / DSM 12428 / JCM 9974 / NBRC 100139 / OT-3).